The primary structure comprises 521 residues: Probable rhamnogalacturonase B (521 aa).

The signal sequence occupies residues 1 to 21; the sequence is MRLHAFTLLSLLGLVPSFAAA. A disulfide bond links C42 and C68. The N-linked (GlcNAc...) asparagine glycan is linked to N145. Catalysis depends on D219, which acts as the Proton donor. C221 and C238 are disulfide-bonded. N239 is a glycosylation site (N-linked (GlcNAc...) asparagine). The active site involves H294. The N-linked (GlcNAc...) asparagine glycan is linked to N321. Intrachain disulfides connect C344/C350 and C372/C381. Residues 462–521 form a disordered region; the sequence is ETPAAASRSEQVVQGAPQETGQSAPESAGPVPSGNPGPVPTGGSRPSRHRHGHHHFGSAI. The segment covering 469–486 has biased composition (polar residues); sequence RSEQVVQGAPQETGQSAP. Basic residues predominate over residues 507–521; the sequence is PSRHRHGHHHFGSAI.

The protein belongs to the glycosyl hydrolase 28 family.

It is found in the secreted. It catalyses the reaction Endohydrolysis of alpha-D-GalA-(1-&gt;2)-alpha-L-Rha glycosidic bond in the rhamnogalacturonan I backbone with initial inversion of anomeric configuration releasing oligosaccharides with beta-D-GalA at the reducing end.. Functionally, pectinolytic enzymes consist of four classes of enzymes: pectine lyase, polygalacturonase, pectin methylesterase and rhamnogalacturonase. Hydrolyzes alpha-D-galacturonopyranosyl-(1,2)-alpha-L-rhamnopyranosyl linkages in the backbone of the hairy regions of pectins. This chain is Probable rhamnogalacturonase B (rhgB), found in Aspergillus fumigatus (strain ATCC MYA-4609 / CBS 101355 / FGSC A1100 / Af293) (Neosartorya fumigata).